The chain runs to 142 residues: Small heat shock protein IbpB (142 aa).

Positions 26–137 (AGESQSFPPY…AAQRIAISER (112 aa)) constitute a sHSP domain.

This sequence belongs to the small heat shock protein (HSP20) family. Homodimer. Forms homomultimers of about 100-150 subunits at optimal growth temperatures. Conformation changes to oligomers at high temperatures or high ionic concentrations. The decrease in size of the multimers is accompanied by an increase in chaperone activity.

Its subcellular location is the cytoplasm. Associates with aggregated proteins, together with IbpA, to stabilize and protect them from irreversible denaturation and extensive proteolysis during heat shock and oxidative stress. Aggregated proteins bound to the IbpAB complex are more efficiently refolded and reactivated by the ATP-dependent chaperone systems ClpB and DnaK/DnaJ/GrpE. Its activity is ATP-independent. This chain is Small heat shock protein IbpB, found in Shigella flexneri serotype 5b (strain 8401).